Consider the following 517-residue polypeptide: L-amino-acid oxidase (517 aa).

An N-terminal signal peptide occupies residues Met-1–Ala-19. Cysteines 29 and 192 form a disulfide. Residues Met-62–Ala-63, Glu-82–Ala-83, Arg-90, and Gly-106–Arg-109 contribute to the FAD site. Arg-109 serves as a coordination point for substrate. N-linked (GlcNAc...) asparagine glycosylation occurs at Asn-191. Val-280 is a binding site for FAD. Cys-350 and Cys-431 are oxidised to a cystine. Asn-380 carries N-linked (GlcNAc...) asparagine glycosylation. Tyr-391 is a binding site for substrate. FAD-binding positions include Glu-476 and Gly-483 to Thr-488. Gly-483–Trp-484 serves as a coordination point for substrate.

Belongs to the flavin monoamine oxidase family. FIG1 subfamily. Monomer. This is in contrast with most of its orthologs, that are non-covalently linked homodimers. The cofactor is FAD. Post-translationally, N-glycosylated. In terms of tissue distribution, expressed by the venom gland.

Its subcellular location is the secreted. It catalyses the reaction an L-alpha-amino acid + O2 + H2O = a 2-oxocarboxylate + H2O2 + NH4(+). It carries out the reaction L-leucine + O2 + H2O = 4-methyl-2-oxopentanoate + H2O2 + NH4(+). The enzyme catalyses L-phenylalanine + O2 + H2O = 3-phenylpyruvate + H2O2 + NH4(+). The catalysed reaction is L-tryptophan + O2 + H2O = indole-3-pyruvate + H2O2 + NH4(+). It catalyses the reaction L-methionine + O2 + H2O = 4-methylsulfanyl-2-oxobutanoate + H2O2 + NH4(+). It carries out the reaction L-isoleucine + O2 + H2O = (S)-3-methyl-2-oxopentanoate + H2O2 + NH4(+). The enzyme catalyses L-arginine + O2 + H2O = 5-guanidino-2-oxopentanoate + H2O2 + NH4(+). The catalysed reaction is L-aspartate + O2 + H2O = oxaloacetate + H2O2 + NH4(+). It catalyses the reaction L-histidine + O2 + H2O = 3-(imidazol-5-yl)pyruvate + H2O2 + NH4(+). It carries out the reaction L-asparagine + O2 + H2O = 2-oxosuccinamate + H2O2 + NH4(+). The enzyme catalyses L-tyrosine + O2 + H2O = 3-(4-hydroxyphenyl)pyruvate + H2O2 + NH4(+). The catalysed reaction is L-glutamine + O2 + H2O = 2-oxoglutaramate + H2O2 + NH4(+). It catalyses the reaction L-alanine + O2 + H2O = pyruvate + H2O2 + NH4(+). It carries out the reaction L-lysine + O2 + H2O = 6-amino-2-oxohexanoate + H2O2 + NH4(+). The enzyme catalyses L-glutamate + O2 + H2O = H2O2 + 2-oxoglutarate + NH4(+). Its function is as follows. Catalyzes an oxidative deamination of predominantly hydrophobic and aromatic L-amino acids, thus producing hydrogen peroxide that may contribute to the diverse toxic effects of this enzyme. Is highly active against L-Tyr, L-Asp, L-Phe, L-Glu, L-Trp, L-His, L-Gln, L-Ile, L-Met, L-Leu and moderately active against L-Lys, L-Arg, L-Ala and L-Asn. Exhibits diverse biological activities, such as edema, inflammatory cell infiltration, cytotoxicity and apoptosis, as well as induction of platelet aggregation. Effects of snake L-amino oxidases on platelets are controversial, since they either induce aggregation or inhibit agonist-induced aggregation. These different effects are probably due to different experimental conditions. This protein may also induce hemorrhage, hemolysis, and have antibacterial and antiparasitic activities. This is L-amino-acid oxidase from Bungarus fasciatus (Banded krait).